Reading from the N-terminus, the 340-residue chain is Cathepsin S (340 aa).

Positions 1–17 are cleaved as a signal peptide; the sequence is MRAPGHAAIRWLFWMPL. Positions 18–122 are cleaved as a propeptide — activation peptide; sequence VCSVAMEQLQ…VTFRSYSNRT (105 aa). Asn120 is a glycosylation site (N-linked (GlcNAc...) asparagine). 4 cysteine pairs are disulfide-bonded: Cys134–Cys233, Cys144–Cys189, Cys178–Cys222, and Cys281–Cys329. Residue Cys147 is part of the active site. Active-site residues include His287 and Asn307.

This sequence belongs to the peptidase C1 family. Widely expressed with highest expression found in non-skeletal tissues. Relatively high levels found in skeletal tissues. Expressed in spleen, B cells, dendritic cells and macrophages.

The protein resides in the lysosome. It localises to the secreted. The protein localises to the cytoplasmic vesicle. It is found in the phagosome. It catalyses the reaction Similar to cathepsin L, but with much less activity on Z-Phe-Arg-|-NHMec, and more activity on the Z-Val-Val-Arg-|-Xaa compound.. Functionally, thiol protease. Key protease responsible for the removal of the invariant chain from MHC class II molecules and MHC class II antigen presentation. The bond-specificity of this proteinase is in part similar to the specificities of cathepsin L. In Mus musculus (Mouse), this protein is Cathepsin S (Ctss).